Reading from the N-terminus, the 158-residue chain is Transmembrane protein 50B (158 aa).

Ala-2 carries the N-acetylalanine modification. 4 consecutive transmembrane segments (helical) span residues 28–48 (VVAG…AVVY), 56–76 (HAFH…NAVS), 98–118 (WLFI…WILF), and 128–148 (VYPG…TLIY).

It belongs to the UPF0220 family. As to quaternary structure, may form homotrimers or homodimers.

It is found in the endoplasmic reticulum membrane. Its subcellular location is the golgi apparatus membrane. The protein is Transmembrane protein 50B (TMEM50B) of Bos taurus (Bovine).